The chain runs to 88 residues: Small ribosomal subunit protein bS20 (88 aa).

This sequence belongs to the bacterial ribosomal protein bS20 family. As to quaternary structure, part of the 30S ribosomal subunit.

In terms of biological role, binds directly to 16S ribosomal RNA. This is Small ribosomal subunit protein bS20 (rpsT) from Bacillus subtilis (strain 168).